A 322-amino-acid chain; its full sequence is MLQGHERSITQIKYNREGDLLFSSSKDQKPNVWYSLNGERLGTYDGHQGAVWCLDVDWESRKLITGAGDMTTKIWDVEYGTVIASIPTKSSVRTSNFSFSGNQAAYSTDKAMGQNCELFIIDVRNADSSLSEQEPTLRIPMVESKITSMLWGPLDETIITGHDNGNIAIWDIRKGQKVVDSGTDHTAGINDMQLSKDGTMFVTASRDTTAKLFDSESLMCLKTYKTERPVNSAAISPILDHVVLGGGQDAMEVTTTSTKAGKFDSRFFHLIYEEEFARLKGHFGPINSLAFHPDGKSYASGGEDGFVRVQSFDSTYFENIFE.

WD repeat units follow at residues Gly-4–Thr-43, Gly-46–Ser-85, Met-141–Asp-180, Asp-184–Thr-223, and Gly-281–Glu-322.

The protein belongs to the eIF-3 subunit I family. In terms of assembly, component of the eukaryotic translation initiation factor 3 (eIF-3) complex. The eIF-3 complex interacts with pix.

The protein resides in the cytoplasm. Functionally, component of the eukaryotic translation initiation factor 3 (eIF-3) complex, which is involved in protein synthesis of a specialized repertoire of mRNAs and, together with other initiation factors, stimulates binding of mRNA and methionyl-tRNAi to the 40S ribosome. The eIF-3 complex specifically targets and initiates translation of a subset of mRNAs involved in cell proliferation. This chain is Eukaryotic translation initiation factor 3 subunit I, found in Drosophila virilis (Fruit fly).